Here is a 177-residue protein sequence, read N- to C-terminus: ATP synthase subunit delta (177 aa).

It belongs to the ATPase delta chain family. In terms of assembly, F-type ATPases have 2 components, F(1) - the catalytic core - and F(0) - the membrane proton channel. F(1) has five subunits: alpha(3), beta(3), gamma(1), delta(1), epsilon(1). F(0) has three main subunits: a(1), b(2) and c(10-14). The alpha and beta chains form an alternating ring which encloses part of the gamma chain. F(1) is attached to F(0) by a central stalk formed by the gamma and epsilon chains, while a peripheral stalk is formed by the delta and b chains.

It is found in the cell inner membrane. In terms of biological role, f(1)F(0) ATP synthase produces ATP from ADP in the presence of a proton or sodium gradient. F-type ATPases consist of two structural domains, F(1) containing the extramembraneous catalytic core and F(0) containing the membrane proton channel, linked together by a central stalk and a peripheral stalk. During catalysis, ATP synthesis in the catalytic domain of F(1) is coupled via a rotary mechanism of the central stalk subunits to proton translocation. This protein is part of the stalk that links CF(0) to CF(1). It either transmits conformational changes from CF(0) to CF(1) or is implicated in proton conduction. In Salmonella agona (strain SL483), this protein is ATP synthase subunit delta.